The following is a 127-amino-acid chain: Large-conductance mechanosensitive channel (127 aa).

Helical transmembrane passes span 9 to 29 (EFAM…GVAF), 32 to 52 (IVTA…LGGI), and 75 to 95 (VIDF…INLL).

It belongs to the MscL family. As to quaternary structure, homopentamer.

The protein localises to the cell inner membrane. In terms of biological role, channel that opens in response to stretch forces in the membrane lipid bilayer. May participate in the regulation of osmotic pressure changes within the cell. The sequence is that of Large-conductance mechanosensitive channel from Legionella pneumophila subsp. pneumophila (strain Philadelphia 1 / ATCC 33152 / DSM 7513).